The sequence spans 303 residues: Beta-carotene 3-hydroxylase 2, chloroplastic (303 aa).

Residues 1–52 constitute a chloroplast transit peptide; the sequence is MAAGLSTIAVTLKPLNRSSFSANHPISTAVFPPSLRFNGFRRRKILTVCFVV. 2 consecutive transmembrane segments (helical) span residues 96–116 and 130–150; these read YLIAAVMSSFGITSMAIMAVY and VLEMFGTFALSVGAAVGMEFW. One can recognise a Fatty acid hydroxylase domain in the interval 143–270; sequence AAVGMEFWAR…KFKGVPYGLF (128 aa). Residues 155–160 carry the Histidine box-1 motif; it reads HRALWH. The Histidine box-2 motif lies at 165–171; it reads NMHESHH. 2 helical membrane-spanning segments follow: residues 180–200 and 206–226; these read LNDVFAITNAVPAIGLLYYGF and VPGLCFGAGLGITMFGMAYMF. Residues 228-233 carry the Histidine box-3 motif; it reads HDGLVH. A Histidine box-4 motif is present at residues 254–258; that stretch reads HQLHH.

The protein belongs to the sterol desaturase family. As to quaternary structure, homodimer. Expressed in leaves, flowers, stems, roots and siliques.

Its subcellular location is the plastid. The protein localises to the chloroplast membrane. The enzyme catalyses all-trans-beta-carotene + 4 reduced [2Fe-2S]-[ferredoxin] + 2 O2 + 4 H(+) = all-trans-zeaxanthin + 4 oxidized [2Fe-2S]-[ferredoxin] + 2 H2O. Its function is as follows. Nonheme diiron monooxygenase involved in the biosynthesis of xanthophylls. Specific for beta-ring hydroxylations of beta-carotene. Also has a low activity toward the beta- and epsilon-rings of alpha-carotene. No activity with acyclic carotenoids such as lycopene and neurosporene. Uses ferredoxin as an electron donor. The polypeptide is Beta-carotene 3-hydroxylase 2, chloroplastic (BETA-OHASE 2) (Arabidopsis thaliana (Mouse-ear cress)).